Here is a 341-residue protein sequence, read N- to C-terminus: UPF0324 membrane protein SMU_2059c (341 aa).

Transmembrane regions (helical) follow at residues 7 to 24 (KLSG…AWFL), 28 to 47 (FPLV…LAIF), 68 to 85 (FAVV…VLTV), 90 to 107 (LPII…AFLL), 120 to 142 (LVGV…VIQA), 147 to 169 (IAQS…PTLG), 178 to 200 (GFAL…AAAW), 211 to 233 (GATI…LSFY), 254 to 276 (VFPM…TALG), 291 to 310 (FCIV…VKLV), and 317 to 339 (IVLG…HLLG).

The protein belongs to the UPF0324 family.

It is found in the cell membrane. This chain is UPF0324 membrane protein SMU_2059c, found in Streptococcus mutans serotype c (strain ATCC 700610 / UA159).